The chain runs to 380 residues: Actin-like protein (380 aa).

The protein belongs to the actin family. ARP1 subfamily.

It localises to the cytoplasm. Its subcellular location is the cytoskeleton. Functionally, involved in nuclear migration. May function as a component of the dynactin complex which activates force generation by cytoplasmic dynein. The chain is Actin-like protein (ro-4) from Neurospora crassa (strain ATCC 24698 / 74-OR23-1A / CBS 708.71 / DSM 1257 / FGSC 987).